We begin with the raw amino-acid sequence, 220 residues long: Dual specificity protein phosphatase 19 (220 aa).

M1 carries the post-translational modification N-acetylmethionine. Residues 64–205 (QVGVIKPWLL…LRTYQVGKES (142 aa)) form the Tyrosine-protein phosphatase domain. Catalysis depends on C149, which acts as the Phosphocysteine intermediate.

The protein belongs to the protein-tyrosine phosphatase family. Non-receptor class dual specificity subfamily.

It carries out the reaction O-phospho-L-tyrosyl-[protein] + H2O = L-tyrosyl-[protein] + phosphate. It catalyses the reaction O-phospho-L-seryl-[protein] + H2O = L-seryl-[protein] + phosphate. The catalysed reaction is O-phospho-L-threonyl-[protein] + H2O = L-threonyl-[protein] + phosphate. Its activity is regulated as follows. Phosphatase activity is enhanced by Ca(2+) and Mn(2+). In terms of biological role, has a dual specificity toward Ser/Thr and Tyr-containing proteins. This is Dual specificity protein phosphatase 19 from Mus musculus (Mouse).